The chain runs to 287 residues: O-ureido-serine racemase (287 aa).

Position 20 (Asn20) interacts with substrate. Cys81 functions as the Proton donor in the catalytic mechanism. Substrate contacts are provided by residues 82 to 83 (GN), Asn167, Asn200, and 218 to 219 (EY). Cys227 (proton acceptor) is an active-site residue. 228–229 (GS) contributes to the substrate binding site.

It belongs to the diaminopimelate epimerase family. Monomer.

It localises to the cytoplasm. It catalyses the reaction O-ureido-L-serine = O-ureido-D-serine. With respect to regulation, inhibited by thiol-inactivating reagents such as iodoacetamide and Hg(2+) ions. In terms of biological role, involved in the biosynthesis of the antibiotic D-cycloserine (DCS), a cyclic structural analog of D-alanine, used as an antitubercular agent. Catalyzes the stereoinversion of O-ureido-L-serine to O-ureido-D-serine. The sequence is that of O-ureido-serine racemase from Streptomyces lavendulae.